We begin with the raw amino-acid sequence, 94 residues long: Cell division protein FtsB (94 aa).

At 1–3 (MRV) the chain is on the cytoplasmic side. A helical membrane pass occupies residues 4 to 21 (FALTLSLLLVWLLYTLMW). Topologically, residues 22-94 (GKNGVMDFRA…YRIIGEESRQ (73 aa)) are periplasmic. Residues 33-76 (QAEIEVQQQVNANLHLRNQEMFAEIDDLRQGLDAIEERARNELG) adopt a coiled-coil conformation.

The protein belongs to the FtsB family. In terms of assembly, part of a complex composed of FtsB, FtsL and FtsQ.

The protein localises to the cell inner membrane. Its function is as follows. Essential cell division protein. May link together the upstream cell division proteins, which are predominantly cytoplasmic, with the downstream cell division proteins, which are predominantly periplasmic. The chain is Cell division protein FtsB from Vibrio cholerae serotype O1 (strain ATCC 39315 / El Tor Inaba N16961).